A 342-amino-acid polypeptide reads, in one-letter code: Dihydroorotate dehydrogenase (quinone) (342 aa).

Residues 60–64 and Thr84 contribute to the FMN site; that span reads AGLDK. Position 64 (Lys64) interacts with substrate. 109-113 contacts substrate; that stretch reads NRMGF. FMN-binding residues include Asn137 and Asn170. Asn170 contributes to the substrate binding site. The active-site Nucleophile is Ser173. Residue Asn175 participates in substrate binding. The FMN site is built by Lys215 and Thr243. A substrate-binding site is contributed by 244–245; the sequence is NT. Residues Gly266, Gly295, and 316 to 317 each bind FMN; that span reads YS.

The protein belongs to the dihydroorotate dehydrogenase family. Type 2 subfamily. As to quaternary structure, monomer. Requires FMN as cofactor.

The protein resides in the cell membrane. It catalyses the reaction (S)-dihydroorotate + a quinone = orotate + a quinol. Its pathway is pyrimidine metabolism; UMP biosynthesis via de novo pathway; orotate from (S)-dihydroorotate (quinone route): step 1/1. In terms of biological role, catalyzes the conversion of dihydroorotate to orotate with quinone as electron acceptor. This Nitrosomonas europaea (strain ATCC 19718 / CIP 103999 / KCTC 2705 / NBRC 14298) protein is Dihydroorotate dehydrogenase (quinone).